Consider the following 356-residue polypeptide: S-adenosylmethionine:tRNA ribosyltransferase-isomerase (356 aa).

The protein belongs to the QueA family. In terms of assembly, monomer.

It is found in the cytoplasm. The enzyme catalyses 7-aminomethyl-7-carbaguanosine(34) in tRNA + S-adenosyl-L-methionine = epoxyqueuosine(34) in tRNA + adenine + L-methionine + 2 H(+). The protein operates within tRNA modification; tRNA-queuosine biosynthesis. Transfers and isomerizes the ribose moiety from AdoMet to the 7-aminomethyl group of 7-deazaguanine (preQ1-tRNA) to give epoxyqueuosine (oQ-tRNA). The polypeptide is S-adenosylmethionine:tRNA ribosyltransferase-isomerase (Escherichia coli O6:K15:H31 (strain 536 / UPEC)).